Consider the following 421-residue polypeptide: CaM kinase-like vesicle-associated protein (421 aa).

The 261-residue stretch at 24 to 284 (YDLGQVVKSE…AQEAIAHEWI (261 aa)) folds into the Protein kinase domain. The disordered stretch occupies residues 326–421 (ASEQGDTGAS…PQMLPQRKGY (96 aa)). 2 stretches are compositionally biased toward low complexity: residues 330–340 (GDTGASGLAAG) and 390–406 (QQQA…QQAR).

The protein belongs to the protein kinase superfamily. CAMK Ser/Thr protein kinase family. Interacts with calmodulin, in the presence of calcium. Ca(2+) serves as cofactor. In terms of tissue distribution, ubiquitously expressed.

It is found in the cytoplasmic vesicle membrane. Functionally, does not appear to have detectable kinase activity. The polypeptide is CaM kinase-like vesicle-associated protein (camkv) (Takifugu rubripes (Japanese pufferfish)).